A 323-amino-acid chain; its full sequence is MCISEGKMDWRSWLRKKFQVRSQLLRGCMAEFLAVFVLMVFTEGCSASAIFTHRRNDLLFAAFGSGLAVTMAVYVAGGVTGAFLNPAIAVAFSVLGKLPWKNCFCYMIAQYLGAFLASLAIYAQYYDALNIFDGGHRQVLGDNGTAQIWSTYPQAFLSPQGAFVDQVFGTALLIIVVLSMVDKKNWKPQNGYFPIAIGLLIVVLDISLAYNAGAALNPSRDLAPRLFTYVAGYGTETFSVKGYTWFFVPVVGSHAGAIVGAVIYQLFIGAQWPQDDLDDSNSVSSMSIHEKNFSLAKRKNTRNFNLDITRDFKERNGISTVLY.

3 helical membrane-spanning segments follow: residues 32 to 54 (FLAVFVLMVFTEGCSASAIFTHR), 74 to 96 (YVAGGVTGAFLNPAIAVAFSVLG), and 103 to 123 (CFCYMIAQYLGAFLASLAIYA). The short motif at 85-87 (NPA) is the NPA 1 element. An N-linked (GlcNAc...) asparagine glycan is attached at Asn-143. Transmembrane regions (helical) follow at residues 161 to 181 (GAFVDQVFGTALLIIVVLSMV) and 193 to 213 (FPIAIGLLIVVLDISLAYNAG). The NPA 2 motif lies at 217 to 219 (NPS). A helical membrane pass occupies residues 243 to 263 (YTWFFVPVVGSHAGAIVGAVI). Residue Asn-292 is glycosylated (N-linked (GlcNAc...) asparagine).

The protein belongs to the MIP/aquaporin (TC 1.A.8) family.

Its subcellular location is the cell membrane. The enzyme catalyses H2O(in) = H2O(out). It carries out the reaction glycerol(in) = glycerol(out). Functionally, aquaglyceroporin that may modulate the water content and osmolytes during anhydrobiosis. This Milnesium tardigradum (Water bear) protein is Aquaporin-2.